Consider the following 119-residue polypeptide: Ribonuclease P protein component (119 aa).

It belongs to the RnpA family. Consists of a catalytic RNA component (M1 or rnpB) and a protein subunit.

It catalyses the reaction Endonucleolytic cleavage of RNA, removing 5'-extranucleotides from tRNA precursor.. RNaseP catalyzes the removal of the 5'-leader sequence from pre-tRNA to produce the mature 5'-terminus. It can also cleave other RNA substrates such as 4.5S RNA. The protein component plays an auxiliary but essential role in vivo by binding to the 5'-leader sequence and broadening the substrate specificity of the ribozyme. This Cronobacter sakazakii (strain ATCC BAA-894) (Enterobacter sakazakii) protein is Ribonuclease P protein component.